A 1223-amino-acid polypeptide reads, in one-letter code: MIDVNKFESMQIGLASPNKIRSWSYGEVKKPETINYRTLKPEKDGLFDERIFGPTKDWSCACGKYKGIRYRGIVCDRCGVEVTSAKVRRERMGHIELAAPVSHIWYFKGIPSRMGLVLDISPRALEEVIYFAAYIVIDAGDTDLEDKQLLTEAEYREKKAKFGNRFEAKMGAEAVKELLEQVDIDKEVHDLKEELKTATGQKRTRAIRRLDILDAFKNSGNKPSWMVMDCIPVIPPDLRPMVQLDGGRFATSDLNDLYRRVINRNNRLKRLLDLNAPRIIVQNEKRMLQEAVDALIDNGRRGRPVVGPGNRPLKSLSHMLKGKQGRFRQNLLGKRVDYSGRSVIDVSPKLKFYQCGVPRPMALELFKPFVMHELVKRGLASNIKNAKRKIDREDDDIWDILEDVIKERPVLLNRAPTLHRLGIQAFEPVLVPGKSIRLHPLACEAYNADFDGDQMAIHVPLSDEAVAESRLLMLAAHHILAPKDGKPIVTPSQDIVLGNYWLTQAERGREGEGMIFDSPAEAAIAYANGDIHYHTRIGLAADSMPEKPWPKGYEHGIFVTTYGKLVFNQIFPKDFFYINDPTQENLTHPVDERYFLQPGEDIHEKLDNMKLGKAFKKGFLSDSIAQIYKDYKVQRTSDFLDDLKELGYTVCTTSGLTIGVEDIPTITDKDDIVAEARKKVDVVSKQYRRGLITDEERHDRVISIWNNCKDIVQNEIAQIHAPRNPITIMADSGARGNISNFTQLAGMRGLMAAPNGGMMEIPVTSNFREGLSVLEMFMSTHGARKGMTDTALKTANSGYLTRRLVDVAQDVIIREEDCGTDRGLTVHAITEGDEMIEPLFDRLVGRYTSKSVYDPETHEVICPADVLMDEDMAHKIVDAGVTEVTIRSVFTCNTQHGVCKKCYGMNLATGDDVEVGEAVGTVAAQSIGEPGTQLTMRNFHNGGVAGAADITQGLPRVQELFEARNPKGRATISEVTGEITSIEEDPAEHTRQITVKGQTDTRTYDVPYTASVAVAEGDHVVRGDKLTLGSIDPKELIRVRDALTTEKYILSEIQKAYRMQGVEIADKHVEVMARQMLQKVRILDPGETDILPGELMDIGEFKARNREVIISGGIPATAQSVILGITKAALETNSFLSAASFQETTRVLTDASIRGKNDPLLGLKENVIIGKIIPAGTGMPVYREMEPKVDVPEDEKKKSVYSIADIEKKLAAADAEKDKGSAD.

Positions 60, 62, 75, and 78 each coordinate Zn(2+). Residues D449, D451, and D453 each contribute to the Mg(2+) site. Residues C818, C892, C899, and C902 each contribute to the Zn(2+) site.

It belongs to the RNA polymerase beta' chain family. The RNAP catalytic core consists of 2 alpha, 1 beta, 1 beta' and 1 omega subunit. When a sigma factor is associated with the core the holoenzyme is formed, which can initiate transcription. It depends on Mg(2+) as a cofactor. Zn(2+) serves as cofactor.

It catalyses the reaction RNA(n) + a ribonucleoside 5'-triphosphate = RNA(n+1) + diphosphate. DNA-dependent RNA polymerase catalyzes the transcription of DNA into RNA using the four ribonucleoside triphosphates as substrates. This is DNA-directed RNA polymerase subunit beta' from Lactobacillus gasseri (strain ATCC 33323 / DSM 20243 / BCRC 14619 / CIP 102991 / JCM 1131 / KCTC 3163 / NCIMB 11718 / NCTC 13722 / AM63).